A 583-amino-acid polypeptide reads, in one-letter code: MPPHLALPFRRLFWSLASSQLIPRRHRGHSLLPTTPEAHTDGSVPVFIRALAFGDRIALIDKYGHHTYRELYDRSLCLAQEICRLQGCKVGDLQEERVSFLCSNDVSYVVAQWASWMSGGVAVPLYWKHPEAQLEYFIQDSRSSLVVVGQEYLERLSPLAQRLGVPLLPLTPAVYHGATEKPTEQPVEESGWRDRGAMIFYTSGTTGRPKGALSTHRNLAAVVTGLVHSWAWTKNDVILHVLPLHHVHGVVNKLLCPLWVGATCVMLPEFSAQQVWEKFLSSEAPQITVFMAVPTVYSKLLDYYDKHFTQPHVQDFVRAVCKERIRLMVSGSAALPVPLLEKWRSATGHTLLERYGMTEIGMALSNPLTEARVPGSVGTPLPGVEVRIISENPQKGSPYIIHAEGNERGTKVTPGFEEKEGELLVRGPSVFREYWDKPEETKSAFTSDGWFRTGDTAVFKDARYWIRGRTSVDIIKTGGYKVSALEIERHLLAHPSITDVAVIGVPDMTWGQRVTAVVALQEGHSLSHGDLKEWARGVLAPYAVPSELLLVEEIPRNQMGKVNKKELLKQLYPSGQRSQPGQG.

Residues 1 to 27 constitute a mitochondrion transit peptide; the sequence is MPPHLALPFRRLFWSLASSQLIPRRHR. ATP is bound by residues 202–210, D455, R469, and K561; that span reads TSGTTGRPK.

The protein belongs to the ATP-dependent AMP-binding enzyme family.

It is found in the mitochondrion. The catalysed reaction is tetracosanoate + ATP + CoA = tetracosanoyl-CoA + AMP + diphosphate. It catalyses the reaction malonate + ATP + CoA = malonyl-CoA + AMP + diphosphate. Catalyzes the initial reaction in intramitochondrial fatty acid synthesis, by activating malonate and methylmalonate, but not acetate, into their respective CoA thioester. May have some preference toward very-long-chain substrates. This is Malonate--CoA ligase ACSF3, mitochondrial from Mus musculus (Mouse).